The chain runs to 328 residues: Gonadotropin-releasing hormone receptor (328 aa).

Over 1–38 the chain is Extracellular; the sequence is MANSASPEQNQNHCSAINNSIPLMQGNLPTLTLSGKIR. The N-linked (GlcNAc...) asparagine glycan is linked to Asn-18. Residues 39 to 58 form a helical membrane-spanning segment; sequence VTVTFFLFLLSATFNASFLL. Residues 59–77 lie on the Cytoplasmic side of the membrane; that stretch reads KLQKWTQKKEKGKKLSRMK. A helical membrane pass occupies residues 78–97; that stretch reads LLLKHLTLANLLETLIVMPL. Topologically, residues 98-115 are extracellular; the sequence is DGMWNITVQWYAGELLCK. Asn-102 carries an N-linked (GlcNAc...) asparagine glycan. A disulfide bridge links Cys-114 with Cys-196. The chain crosses the membrane as a helical span at residues 116–137; it reads VLSYLKLFSMYAPAFMMVVISL. The Cytoplasmic portion of the chain corresponds to 138–164; the sequence is DRSLAITRPLALKSNSKVGQSMVGLAW. A helical transmembrane segment spans residues 165-184; the sequence is ILSSVFAGPQLYIFRMIHLA. The Extracellular portion of the chain corresponds to 185–212; sequence DSSGQTKVFSQCVTHCSFSQWWHQAFYN. A helical transmembrane segment spans residues 213–232; that stretch reads FFTFSCLFIIPLFIMLICNA. Residues 233 to 281 lie on the Cytoplasmic side of the membrane; that stretch reads KIIFTLTRVLHQDPHELQLNQSKNNIPRARLKTLKMTVAFATSFTVCWT. A helical transmembrane segment spans residues 282-300; that stretch reads PYYVLGIWYWFDPEMLNRL. Residues 301 to 306 are Extracellular-facing; the sequence is SDPVNH. The helical transmembrane segment at 307 to 326 threads the bilayer; that stretch reads FFFLFAFLNPCFDPLIYGYF. Residues 327-328 lie on the Cytoplasmic side of the membrane; the sequence is SL.

Belongs to the G-protein coupled receptor 1 family. In terms of tissue distribution, pituitary, ovary, testis, breast and prostate but not in liver and spleen.

Its subcellular location is the cell membrane. Functionally, receptor for gonadotropin releasing hormone (GnRH) that mediates the action of GnRH to stimulate the secretion of the gonadotropic hormones luteinizing hormone (LH) and follicle-stimulating hormone (FSH). This receptor mediates its action by association with G-proteins that activate a phosphatidylinositol-calcium second messenger system. Isoform 2 may act as an inhibitor of GnRH-R signaling. In Homo sapiens (Human), this protein is Gonadotropin-releasing hormone receptor (GNRHR).